Consider the following 215-residue polypeptide: Peptide methionine sulfoxide reductase MsrA (215 aa).

Cysteine 58 is an active-site residue.

This sequence belongs to the MsrA Met sulfoxide reductase family.

It carries out the reaction L-methionyl-[protein] + [thioredoxin]-disulfide + H2O = L-methionyl-(S)-S-oxide-[protein] + [thioredoxin]-dithiol. The enzyme catalyses [thioredoxin]-disulfide + L-methionine + H2O = L-methionine (S)-S-oxide + [thioredoxin]-dithiol. Has an important function as a repair enzyme for proteins that have been inactivated by oxidation. Catalyzes the reversible oxidation-reduction of methionine sulfoxide in proteins to methionine. This is Peptide methionine sulfoxide reductase MsrA from Pseudomonas syringae pv. tomato (strain ATCC BAA-871 / DC3000).